A 259-amino-acid polypeptide reads, in one-letter code: Pyrroloquinoline-quinone synthase (259 aa).

This sequence belongs to the PqqC family.

It carries out the reaction 6-(2-amino-2-carboxyethyl)-7,8-dioxo-1,2,3,4,7,8-hexahydroquinoline-2,4-dicarboxylate + 3 O2 = pyrroloquinoline quinone + 2 H2O2 + 2 H2O + H(+). The protein operates within cofactor biosynthesis; pyrroloquinoline quinone biosynthesis. Its function is as follows. Ring cyclization and eight-electron oxidation of 3a-(2-amino-2-carboxyethyl)-4,5-dioxo-4,5,6,7,8,9-hexahydroquinoline-7,9-dicarboxylic-acid to PQQ. The protein is Pyrroloquinoline-quinone synthase of Bradyrhizobium diazoefficiens (strain JCM 10833 / BCRC 13528 / IAM 13628 / NBRC 14792 / USDA 110).